The following is a 153-amino-acid chain: D-aminoacyl-tRNA deacylase (153 aa).

The Gly-cisPro motif, important for rejection of L-amino acids motif lies at 140 to 141; that stretch reads GP.

The protein belongs to the DTD family. Homodimer.

Its subcellular location is the cytoplasm. The enzyme catalyses glycyl-tRNA(Ala) + H2O = tRNA(Ala) + glycine + H(+). The catalysed reaction is a D-aminoacyl-tRNA + H2O = a tRNA + a D-alpha-amino acid + H(+). Its function is as follows. An aminoacyl-tRNA editing enzyme that deacylates mischarged D-aminoacyl-tRNAs. Also deacylates mischarged glycyl-tRNA(Ala), protecting cells against glycine mischarging by AlaRS. Acts via tRNA-based rather than protein-based catalysis; rejects L-amino acids rather than detecting D-amino acids in the active site. By recycling D-aminoacyl-tRNA to D-amino acids and free tRNA molecules, this enzyme counteracts the toxicity associated with the formation of D-aminoacyl-tRNA entities in vivo and helps enforce protein L-homochirality. The protein is D-aminoacyl-tRNA deacylase of Trichodesmium erythraeum (strain IMS101).